The sequence spans 63 residues: Bowman-birk type proteinase inhibitor (63 aa).

7 cysteine pairs are disulfide-bonded: C7–C61, C8–C23, C11–C57, C13–C21, C31–C38, C35–C50, and C40–C48.

Inhibits trypsin, chymotrypsin, plasmin and factor XIIa. Does not inhibit factor Xa, thrombin and plasma kallikrein. This is Bowman-birk type proteinase inhibitor from Amburana acreana (Cerejeira).